The primary structure comprises 142 residues: Nucleoside diphosphate kinase (142 aa).

Residues Lys-11, Phe-59, Arg-87, Thr-93, Arg-104, and Asn-114 each contribute to the ATP site. The active-site Pros-phosphohistidine intermediate is the His-117.

This sequence belongs to the NDK family. In terms of assembly, homotetramer. Mg(2+) is required as a cofactor.

Its subcellular location is the cytoplasm. The enzyme catalyses a 2'-deoxyribonucleoside 5'-diphosphate + ATP = a 2'-deoxyribonucleoside 5'-triphosphate + ADP. It catalyses the reaction a ribonucleoside 5'-diphosphate + ATP = a ribonucleoside 5'-triphosphate + ADP. Its function is as follows. Major role in the synthesis of nucleoside triphosphates other than ATP. The ATP gamma phosphate is transferred to the NDP beta phosphate via a ping-pong mechanism, using a phosphorylated active-site intermediate. The polypeptide is Nucleoside diphosphate kinase (Yersinia pseudotuberculosis serotype O:1b (strain IP 31758)).